Here is a 251-residue protein sequence, read N- to C-terminus: Vacuolar protein sorting-associated protein 37D (251 aa).

The 90-residue stretch at 93 to 182 (AENCADKLQR…RRRERSAQPA (90 aa)) folds into the VPS37 C-terminal domain. Positions 174–251 (RRERSAQPAP…RPSQPEPPHR (78 aa)) are disordered. Over residues 221 to 251 (PVPPLKGSPGCPLGPAPLLSPRPSQPEPPHR) the composition is skewed to pro residues.

It belongs to the VPS37 family. As to quaternary structure, component of the ESCRT-I complex (endosomal sorting complex required for transport I) which consists of TSG101, VPS28, a VPS37 protein (VPS37A to -D) and MVB12A or MVB12B in a 1:1:1:1 stoichiometry. Interacts with TSG101 and MVB12A. Component of the ESCRT-I complex (endosomal sorting complex required for transport I) which consists of TSG101, VPS28, a VPS37 protein (VPS37A to -D) and UBAP1 in a 1:1:1:1 stoichiometry.

The protein localises to the late endosome membrane. Component of the ESCRT-I complex, a regulator of vesicular trafficking process. Required for the sorting of endocytic ubiquitinated cargos into multivesicular bodies. May be involved in cell growth and differentiation. This Homo sapiens (Human) protein is Vacuolar protein sorting-associated protein 37D.